The sequence spans 322 residues: Ferredoxin--NADP reductase (322 aa).

FAD contacts are provided by Asp34, Gln42, Tyr47, Val87, Phe120, Asp279, and Thr320.

This sequence belongs to the ferredoxin--NADP reductase type 2 family. As to quaternary structure, homodimer. It depends on FAD as a cofactor.

The enzyme catalyses 2 reduced [2Fe-2S]-[ferredoxin] + NADP(+) + H(+) = 2 oxidized [2Fe-2S]-[ferredoxin] + NADPH. The chain is Ferredoxin--NADP reductase from Streptococcus gordonii (strain Challis / ATCC 35105 / BCRC 15272 / CH1 / DL1 / V288).